The primary structure comprises 120 residues: uncharacterized protein (120 aa).

The protein to E.coli YiaW.

This is an uncharacterized protein from Escherichia coli (strain K12).